The primary structure comprises 260 residues: Endomucin (260 aa).

The signal sequence occupies residues 1 to 18 (MELLQVTILFLLPSICSS). N-linked (GlcNAc...) asparagine glycans are attached at residues Asn19, Asn28, Asn97, and Asn103. Topologically, residues 19–189 (NSTGVLEAAN…TSATSRSYSS (171 aa)) are extracellular. 2 stretches are compositionally biased toward polar residues: residues 119-133 (QSSK…SIKT) and 145-170 (ASPS…SQVI). The interval 119–182 (QSSKPKTETQ…EGGKNASTSA (64 aa)) is disordered. 2 N-linked (GlcNAc...) asparagine glycosylation sites follow: Asn163 and Asn177. A helical membrane pass occupies residues 190 to 210 (IILPVVIALIVITLSVFVLVG). At 211-260 (LYRMCWKADPGTPENGNDQPQSDKESVKLLTVKTISHESGEHSAQGKTKN) the chain is on the cytoplasmic side. Ser236 bears the Phosphoserine mark.

Highly O-glycosylated. Sialic acid-rich glycoprotein.

It is found in the membrane. Functionally, endothelial sialomucin, also called endomucin or mucin-like sialoglycoprotein, which interferes with the assembly of focal adhesion complexes and inhibits interaction between cells and the extracellular matrix. This chain is Endomucin (EMCN), found in Pongo abelii (Sumatran orangutan).